We begin with the raw amino-acid sequence, 502 residues long: Na(+)/H(+) antiporter NhaB (502 aa).

11 helical membrane passes run 27–49 (AFLV…VLIL), 66–86 (PGGL…ESVF), 95–115 (VILL…LLLY), 128–148 (IVLS…LDAL), 149–169 (TVTA…HQFA), 241–261 (FFLQ…VTCI), 299–318 (IAAL…SLAL), 350–370 (FEEA…VAVI), 394–414 (MFFI…VATV), 450–470 (ATPN…APLI), and 477–497 (MVLM…IAVY).

It belongs to the NhaB Na(+)/H(+) (TC 2.A.34) antiporter family.

The protein localises to the cell inner membrane. The enzyme catalyses 2 Na(+)(in) + 3 H(+)(out) = 2 Na(+)(out) + 3 H(+)(in). In terms of biological role, na(+)/H(+) antiporter that extrudes sodium in exchange for external protons. This Teredinibacter turnerae (strain ATCC 39867 / T7901) protein is Na(+)/H(+) antiporter NhaB.